Here is a 63-residue protein sequence, read N- to C-terminus: Prokaryotic ubiquitin-like protein Pup (63 aa).

Residues 1–28 (MSDRQTQIPAGGGREDDHDDQVQSAGQV) are disordered. Residues 19–57 (DDQVQSAGQVQVNTEGVDDLLDEIDGLLENNAEEFVRSY) are ARC ATPase binding. Glu63 is covalently cross-linked (Isoglutamyl lysine isopeptide (Glu-Lys) (interchain with K-? in acceptor proteins)).

This sequence belongs to the prokaryotic ubiquitin-like protein family. Strongly interacts with the proteasome-associated ATPase ARC through a hydrophobic interface; the interacting region of Pup lies in its C-terminal half. There is one Pup binding site per ARC hexamer ring.

It participates in protein degradation; proteasomal Pup-dependent pathway. Its function is as follows. Protein modifier that is covalently attached to lysine residues of substrate proteins, thereby targeting them for proteasomal degradation. The tagging system is termed pupylation. In Corynebacterium efficiens (strain DSM 44549 / YS-314 / AJ 12310 / JCM 11189 / NBRC 100395), this protein is Prokaryotic ubiquitin-like protein Pup.